The following is a 23-amino-acid chain: Mu-conotoxin-like SxIIIB (23 aa).

Gln1 carries the pyrrolidone carboxylic acid modification. Cystine bridges form between Cys3–Cys16, Cys4–Cys21, and Cys11–Cys22. Ala23 is subject to Alanine amide.

The protein belongs to the conotoxin M superfamily. As to expression, expressed by the venom duct.

It is found in the secreted. In terms of biological role, mu-conotoxins block voltage-gated sodium channels (Nav). In Conus striolatus (Cone snail), this protein is Mu-conotoxin-like SxIIIB.